A 401-amino-acid chain; its full sequence is Probable N-acetyl-gamma-glutamyl-phosphate reductase, chloroplastic (401 aa).

The N-terminal 48 residues, 1–48 (MSTASAFSSIQGCWFKGERKIRVADKRAKRLTLGSHVASPSSMSFRVS), are a transit peptide targeting the chloroplast. C205 is a catalytic residue.

Belongs to the NAGSA dehydrogenase family. Type 1 subfamily. In terms of assembly, homotetramer.

It localises to the plastid. Its subcellular location is the chloroplast. It carries out the reaction N-acetyl-L-glutamate 5-semialdehyde + phosphate + NADP(+) = N-acetyl-L-glutamyl 5-phosphate + NADPH + H(+). Its pathway is amino-acid biosynthesis; L-arginine biosynthesis; N(2)-acetyl-L-ornithine from L-glutamate: step 3/4. This Arabidopsis thaliana (Mouse-ear cress) protein is Probable N-acetyl-gamma-glutamyl-phosphate reductase, chloroplastic.